We begin with the raw amino-acid sequence, 98 residues long: Cystatin-B (98 aa).

Methionine 1 bears the N-acetylmethionine mark. Positions 46-50 (QLVAG) match the Secondary area of contact motif.

This sequence belongs to the cystatin family. Able to form dimers stabilized by noncovalent forces.

Its subcellular location is the cytoplasm. In terms of biological role, this is an intracellular thiol proteinase inhibitor. The polypeptide is Cystatin-B (CSTB) (Bos taurus (Bovine)).